A 604-amino-acid chain; its full sequence is Elongation factor 4 (604 aa).

A tr-type G domain is found at 8-190 (KNKRNFSIIA…AIVHRIPAPN (183 aa)). GTP-binding positions include 20-25 (DHGKST) and 137-140 (NKID).

This sequence belongs to the TRAFAC class translation factor GTPase superfamily. Classic translation factor GTPase family. LepA subfamily.

The protein localises to the cell inner membrane. It catalyses the reaction GTP + H2O = GDP + phosphate + H(+). In terms of biological role, required for accurate and efficient protein synthesis under certain stress conditions. May act as a fidelity factor of the translation reaction, by catalyzing a one-codon backward translocation of tRNAs on improperly translocated ribosomes. Back-translocation proceeds from a post-translocation (POST) complex to a pre-translocation (PRE) complex, thus giving elongation factor G a second chance to translocate the tRNAs correctly. Binds to ribosomes in a GTP-dependent manner. The polypeptide is Elongation factor 4 (Fusobacterium nucleatum subsp. nucleatum (strain ATCC 25586 / DSM 15643 / BCRC 10681 / CIP 101130 / JCM 8532 / KCTC 2640 / LMG 13131 / VPI 4355)).